We begin with the raw amino-acid sequence, 379 residues long: Lactosylceramide 1,3-N-acetyl-beta-D-glucosaminyltransferase A (379 aa).

Residues 1-12 (MFMNCRRVKKWH) lie on the Cytoplasmic side of the membrane. A helical; Signal-anchor for type II membrane protein transmembrane segment spans residues 13-30 (FLQLLSMCCVMSVLMVCW). At 31 to 379 (EHVDHHVVSH…NTYSCMAAFT (349 aa)) the chain is on the lumenal side. N-linked (GlcNAc...) asparagine glycosylation is found at asparagine 57, asparagine 113, asparagine 168, and asparagine 277.

Belongs to the glycosyltransferase 31 family.

It localises to the golgi apparatus membrane. The enzyme catalyses a beta-D-Gal-(1-&gt;4)-beta-D-Glc-(1&lt;-&gt;1)-Cer(d18:1(4E)) + UDP-N-acetyl-alpha-D-glucosamine = a beta-D-GlcNAc-(1-&gt;3)-beta-D-Gal-(1-&gt;4)-beta-D-Glc-(1&lt;-&gt;1)-Cer(d18:1(4E)) + UDP + H(+). The catalysed reaction is a neolactoside nLc4Cer(d18:1(4E)) + UDP-N-acetyl-alpha-D-glucosamine = a neolactoside IV(3)-beta-GlcNAc-nLc4Cer(d18:1(4E)) + UDP + H(+). The protein operates within protein modification; protein glycosylation. Functionally, beta-1,3-N-acetylglucosaminyltransferase that plays a key role in the synthesis of lacto- or neolacto-series carbohydrate chains on glycolipids. In Danio rerio (Zebrafish), this protein is Lactosylceramide 1,3-N-acetyl-beta-D-glucosaminyltransferase A (b3gnt5a).